The following is a 156-amino-acid chain: Small ribosomal subunit protein uS7 (156 aa).

Belongs to the universal ribosomal protein uS7 family. As to quaternary structure, part of the 30S ribosomal subunit. Contacts proteins S9 and S11.

One of the primary rRNA binding proteins, it binds directly to 16S rRNA where it nucleates assembly of the head domain of the 30S subunit. Is located at the subunit interface close to the decoding center, probably blocks exit of the E-site tRNA. The protein is Small ribosomal subunit protein uS7 of Paenarthrobacter aurescens (strain TC1).